The primary structure comprises 418 residues: STE20-related kinase adapter protein beta (418 aa).

The region spanning 58-369 is the Protein kinase domain; it reads YELQVEIGRG…ASSLLSHVFF (312 aa). Residues 64–72 and K89 contribute to the ATP site; that span reads IGRGFDNLT.

Belongs to the protein kinase superfamily. STE Ser/Thr protein kinase family. STE20 subfamily. As to quaternary structure, component of a trimeric complex composed of STK11/LKB1, STRAD (STRADA or STRADB) and CAB39/MO25 (CAB39/MO25alpha or CAB39L/MO25beta): the complex tethers STK11/LKB1 in the cytoplasm and stimulates its catalytic activity. Interacts with BIRC4/XIAP. These two proteins are likely to coexist in a complex with TAK1, TRAF6, TAB1 and TAB2. In terms of tissue distribution, highly expressed in heart, skeletal muscle, testis, liver and colon.

It is found in the nucleus. Its subcellular location is the cytoplasm. Pseudokinase which, in complex with CAB39/MO25 (CAB39/MO25alpha or CAB39L/MO25beta), binds to and activates STK11/LKB1. Adopts a closed conformation typical of active protein kinases and binds STK11/LKB1 as a pseudosubstrate, promoting conformational change of STK11/LKB1 in an active conformation. The protein is STE20-related kinase adapter protein beta (STRADB) of Homo sapiens (Human).